A 335-amino-acid chain; its full sequence is D-arabinose 1-dehydrogenase (335 aa).

Y58 (proton donor) is an active-site residue. H124 contributes to the substrate binding site. Residue 221–287 (SLLRSQETRQ…VSSMEELKLA (67 aa)) coordinates NAD(+).

This sequence belongs to the aldo/keto reductase family. Aldo/keto reductase 2 subfamily.

It catalyses the reaction D-arabinose + NAD(+) = D-arabinono-1,4-lactone + NADH + H(+). The protein is D-arabinose 1-dehydrogenase (ARA2) of Saccharomyces cerevisiae (strain ATCC 204508 / S288c) (Baker's yeast).